The following is a 120-amino-acid chain: uncharacterized protein (120 aa).

In terms of domain architecture, VOC spans 4 to 120 (QIGTVAVYVE…EDGNVFLLKE (117 aa)).

This is an uncharacterized protein from Bacillus subtilis (strain 168).